The chain runs to 371 residues: Putative glutamate--cysteine ligase 2 (371 aa).

Belongs to the glutamate--cysteine ligase type 2 family. YbdK subfamily.

It carries out the reaction L-cysteine + L-glutamate + ATP = gamma-L-glutamyl-L-cysteine + ADP + phosphate + H(+). Functionally, ATP-dependent carboxylate-amine ligase which exhibits weak glutamate--cysteine ligase activity. The polypeptide is Putative glutamate--cysteine ligase 2 (Cupriavidus taiwanensis (strain DSM 17343 / BCRC 17206 / CCUG 44338 / CIP 107171 / LMG 19424 / R1) (Ralstonia taiwanensis (strain LMG 19424))).